Here is a 74-residue protein sequence, read N- to C-terminus: Acyl carrier protein (74 aa).

A Carrier domain is found at 1–74; it reads MFEKVRKIIA…DVVEYIKNNS (74 aa). S34 is subject to O-(pantetheine 4'-phosphoryl)serine.

The protein belongs to the acyl carrier protein (ACP) family. In terms of processing, 4'-phosphopantetheine is transferred from CoA to a specific serine of apo-ACP by AcpS. This modification is essential for activity because fatty acids are bound in thioester linkage to the sulfhydryl of the prosthetic group.

Its subcellular location is the cytoplasm. It functions in the pathway lipid metabolism; fatty acid biosynthesis. Carrier of the growing fatty acid chain in fatty acid biosynthesis. The protein is Acyl carrier protein of Acetivibrio thermocellus (strain ATCC 27405 / DSM 1237 / JCM 9322 / NBRC 103400 / NCIMB 10682 / NRRL B-4536 / VPI 7372) (Clostridium thermocellum).